We begin with the raw amino-acid sequence, 218 residues long: Riboflavin synthase (218 aa).

2 Lumazine-binding repeats span residues 1–97 (MFTG…LGGH) and 98–194 (LVSG…EKLI). 2,4-dihydroxypteridine-binding positions include 4-6 (GII), 48-50 (CLT), 62-67 (DLSLET), 101-103 (GHV), K136, 145-147 (SLT), and 159-164 (TIVPHT).

Homotrimer.

It catalyses the reaction 2 6,7-dimethyl-8-(1-D-ribityl)lumazine + H(+) = 5-amino-6-(D-ribitylamino)uracil + riboflavin. The protein operates within cofactor biosynthesis; riboflavin biosynthesis; riboflavin from 2-hydroxy-3-oxobutyl phosphate and 5-amino-6-(D-ribitylamino)uracil: step 2/2. Functionally, catalyzes the dismutation of two molecules of 6,7-dimethyl-8-ribityllumazine, resulting in the formation of riboflavin and 5-amino-6-(D-ribitylamino)uracil. The sequence is that of Riboflavin synthase (ribE) from Photobacterium leiognathi.